A 552-amino-acid polypeptide reads, in one-letter code: Berberine bridge enzyme-like 6 (552 aa).

A signal peptide spans 1-16 (MKEAFVFLLCLTNKFP). Residues cysteine 56 and cysteine 119 are joined by a disulfide bond. 6 N-linked (GlcNAc...) asparagine glycosylation sites follow: asparagine 76, asparagine 161, asparagine 280, asparagine 364, asparagine 419, and asparagine 463. The 178-residue stretch at 93–270 (FSSPNFKKLL…LSWKINLVEV (178 aa)) folds into the FAD-binding PCMH-type domain. Positions 134–196 (HDNEGFSYMS…QTLAFPAGVC (63 aa)) form a cross-link, 6-(S-cysteinyl)-8alpha-(pros-histidyl)-FAD (His-Cys).

Belongs to the oxygen-dependent FAD-linked oxidoreductase family. Requires FAD as cofactor. The FAD cofactor is bound via a bicovalent 6-S-cysteinyl, 8alpha-N1-histidyl FAD linkage.

It is found in the secreted. It localises to the cell wall. In terms of biological role, probable flavin-dependent oxidoreductase. The polypeptide is Berberine bridge enzyme-like 6 (Arabidopsis thaliana (Mouse-ear cress)).